The following is a 269-amino-acid chain: Interleukin-1 beta (269 aa).

A propeptide spans 1 to 116 (MAEVPELASE…TWDNEAYVHD (116 aa)) (removed in mature form; by CASP1). Positions 228–241 (FESAQFPNWYISTS) match the Involved in interaction with TMED10 C-terminus motif.

The protein belongs to the IL-1 family. In terms of assembly, monomer. In its precursor form, weakly interacts with full-length MEFV; the mature cytokine does not interact at all. Interacts with integrins ITGAV:ITGBV and ITGA5:ITGB1; integrin-binding is required for IL1B signaling. Interacts with cargo receptor TMED10; the interaction is direct and is required for the secretion of IL1B mature form. Interacts with HSP90AB1; the interaction facilitates cargo translocation into the ERGIC. Interacts with HSP90B1; the interaction facilitates cargo translocation into the ERGIC. Activation of the IL1B precursor involves a CASP1-catalyzed proteolytic cleavage. Processing and secretion are temporarily associated. Post-translationally, (Microbial infection) Cleavage by S.pyogenes cysteine protease SpeB promotes its activation independently of CASP1. As to expression, expressed in activated monocytes/macrophages (at protein level).

It is found in the cytoplasm. Its subcellular location is the cytosol. The protein localises to the secreted. It localises to the lysosome. The protein resides in the extracellular exosome. With respect to regulation, (Microbial infection) Cleavage by S.pyogenes cysteine protease SpeB promotes its activation independently of CASP1. SpeB-mediated maturation of IL1B plays a dual role depending on infection site: while IL1B inflammatory response prevents bacterial growth during invasive skin infections, it promotes streptococcal infection of the nasopharynx by disrupting colonization resistance mediated by the microbiota. Functionally, potent pro-inflammatory cytokine. Initially discovered as the major endogenous pyrogen, induces prostaglandin synthesis, neutrophil influx and activation, T-cell activation and cytokine production, B-cell activation and antibody production, and fibroblast proliferation and collagen production. Promotes Th17 differentiation of T-cells. Synergizes with IL12/interleukin-12 to induce IFNG synthesis from T-helper 1 (Th1) cells. Plays a role in angiogenesis by inducing VEGF production synergistically with TNF and IL6. Involved in transduction of inflammation downstream of pyroptosis: its mature form is specifically released in the extracellular milieu by passing through the gasdermin-D (GSDMD) pore. Acts as a sensor of S.pyogenes infection in skin: cleaved and activated by pyogenes SpeB protease, leading to an inflammatory response that prevents bacterial growth during invasive skin infection. In Homo sapiens (Human), this protein is Interleukin-1 beta.